The chain runs to 317 residues: Sulfate adenylyltransferase subunit 2 (317 aa).

Residues 1–10 (MSNAVHETDS) are compositionally biased toward basic and acidic residues. Disordered stretches follow at residues 1–21 (MSNA…PPLD) and 298–317 (RAID…EGYF).

The protein belongs to the PAPS reductase family. CysD subfamily. In terms of assembly, heterodimer composed of CysD, the smaller subunit, and CysN.

It catalyses the reaction sulfate + ATP + H(+) = adenosine 5'-phosphosulfate + diphosphate. Its pathway is sulfur metabolism; hydrogen sulfide biosynthesis; sulfite from sulfate: step 1/3. Functionally, with CysN forms the ATP sulfurylase (ATPS) that catalyzes the adenylation of sulfate producing adenosine 5'-phosphosulfate (APS) and diphosphate, the first enzymatic step in sulfur assimilation pathway. APS synthesis involves the formation of a high-energy phosphoric-sulfuric acid anhydride bond driven by GTP hydrolysis by CysN coupled to ATP hydrolysis by CysD. The protein is Sulfate adenylyltransferase subunit 2 of Agrobacterium fabrum (strain C58 / ATCC 33970) (Agrobacterium tumefaciens (strain C58)).